Reading from the N-terminus, the 150-residue chain is D-aminoacyl-tRNA deacylase (150 aa).

Positions 138-139 match the Gly-cisPro motif, important for rejection of L-amino acids motif; it reads GP.

The protein belongs to the DTD family. In terms of assembly, homodimer.

It is found in the cytoplasm. It catalyses the reaction glycyl-tRNA(Ala) + H2O = tRNA(Ala) + glycine + H(+). The catalysed reaction is a D-aminoacyl-tRNA + H2O = a tRNA + a D-alpha-amino acid + H(+). Functionally, an aminoacyl-tRNA editing enzyme that deacylates mischarged D-aminoacyl-tRNAs. Also deacylates mischarged glycyl-tRNA(Ala), protecting cells against glycine mischarging by AlaRS. Acts via tRNA-based rather than protein-based catalysis; rejects L-amino acids rather than detecting D-amino acids in the active site. By recycling D-aminoacyl-tRNA to D-amino acids and free tRNA molecules, this enzyme counteracts the toxicity associated with the formation of D-aminoacyl-tRNA entities in vivo and helps enforce protein L-homochirality. The sequence is that of D-aminoacyl-tRNA deacylase from Chlorobaculum tepidum (strain ATCC 49652 / DSM 12025 / NBRC 103806 / TLS) (Chlorobium tepidum).